The chain runs to 824 residues: Protein bicaudal D homolog 2 (824 aa).

Position 2 is an N-acetylserine (S2). Residues 20 to 269 (EWLRAEVKRL…ELSHYMSIND (250 aa)) are a coiled coil. The tract at residues 25-398 (EVKRLSHELA…RLTENLSALR (374 aa)) is interacts with DYNLL1, DYNC1H1, DYNC1I2, DCTN1 and DCTN2. Phosphoserine occurs at positions 190, 224, and 318. The disordered stretch occupies residues 311-330 (LPLDNKTSTPKKEGLAPPSP). T319 bears the Phosphothreonine mark. The interval 334–599 (SDLLSELNIS…LLAPEAGRAD (266 aa)) is interaction with KIF5A. The stretch at 338 to 537 (SELNISEIQK…VTFSEELANL (200 aa)) forms a coiled coil. A phosphoserine mark is found at S343 and S395. Disordered stretches follow at residues 398–425 (RRLQ…GDYY), 559–622 (EGQG…DPRR), and 804–824 (EQTR…TPSL). Over residues 402 to 422 (ASKERQTALDNEKDRDSHEDG) the composition is skewed to basic and acidic residues. 3 positions are modified to phosphoserine: S568, S574, and S582. Residues 590 to 824 (LLAPEAGRAD…PKTKPATPSL (235 aa)) form an interaction with RANBP2 region. A Phosphothreonine modification is found at T602. Low complexity predominate over residues 604–618 (DSSPSPGSSLPSPLS). Residues 666 to 808 (DKDKEALMEE…LELDHEQTRR (143 aa)) are a coiled coil. The interacts with RAB6A stretch occupies residues 666–814 (DKDKEALMEE…QTRRGRAKAA (149 aa)). A Phosphothreonine modification is found at T821. S823 is modified (phosphoserine).

The protein belongs to the BicD family. As to quaternary structure, part of a tripartite complex with dynein and dynactin, acts an adapter linking the dynein motor complex and dynactin. Interacts with CPNE4 (via VWFA domain). Interacts with RAB6A. Interacts with NEK9. Interacts with DNAI1. Interacts with DYNC1H1. Interacts with RANBP2. Binds preferentially to tyrosinated microtubules than to detyrosinated microtubules. Interacts with DYNLL1, DYNC1I2; DCTN1, DCTN2 and KIF5A. Interacts with KIF1C. In terms of processing, phosphorylated by NEK9 in vitro. Ubiquitous.

It is found in the golgi apparatus. The protein localises to the cytoplasm. It localises to the cytoskeleton. The protein resides in the nucleus envelope. Its subcellular location is the nucleus. It is found in the nuclear pore complex. In terms of biological role, acts as an adapter protein linking the dynein motor complex to various cargos and converts dynein from a non-processive to a highly processive motor in the presence of dynactin. Facilitates and stabilizes the interaction between dynein and dynactin and activates dynein processivity (the ability to move along a microtubule for a long distance without falling off the track). Facilitates the binding of RAB6A to the Golgi by stabilizing its GTP-bound form. Regulates coat complex coatomer protein I (COPI)-independent Golgi-endoplasmic reticulum transport via its interaction with RAB6A and recruitment of the dynein-dynactin motor complex. Contributes to nuclear and centrosomal positioning prior to mitotic entry through regulation of both dynein and kinesin-1. During G2 phase of the cell cycle, associates with RANBP2 at the nuclear pores and recruits dynein and dynactin to the nuclear envelope to ensure proper positioning of the nucleus relative to centrosomes prior to the onset of mitosis. This Homo sapiens (Human) protein is Protein bicaudal D homolog 2.